Reading from the N-terminus, the 113-residue chain is Hydrogenase maturation factor HybF (113 aa).

Positions 2 and 3 each coordinate Ni(2+). Zn(2+) is bound by residues Cys-73, Cys-76, Cys-89, and Cys-92.

This sequence belongs to the HypA/HybF family. HybF subfamily.

In terms of biological role, involved in the maturation of [NiFe] hydrogenases. Required for nickel insertion into the metal center of the hydrogenase. The protein is Hydrogenase maturation factor HybF of Escherichia coli O6:H1 (strain CFT073 / ATCC 700928 / UPEC).